Reading from the N-terminus, the 563-residue chain is Grainyhead-like protein 1 homolog (563 aa).

A Grh/CP2 DB domain is found at 194 to 428 (NNLGFQYVLE…ELDKPAALFI (235 aa)). Interaction with DNA stretches follow at residues 326-335 (TDFSTQKGVK) and 372-375 (RKLR). The interval 377–405 (EDKRAQKRKVQEYTAGALPGGRKKSDGEY) is disordered.

It belongs to the grh/CP2 family. Grainyhead subfamily.

Its subcellular location is the nucleus. Probable transcription factor. Binds a motif with the core sequence 5'-C[ACT][TG]G-3' in regulatory elements of target genes. Many putative target genes show oscillating expression levels, perhaps as a result of rhythmic variation in accumulation of grh-1. Plays a role in proper cuticle formation and/or barrier function and is required repetitively during development, for successful completion of each molt. Involved in modulating lifespan. Plays a role in defense response to bacteria. May act upstream of the p38 MAP kinase / pmk-1 pathway. May act downstream of the insulin/IGF-1 receptor signaling (IIS) pathway. The sequence is that of Grainyhead-like protein 1 homolog from Caenorhabditis elegans.